The following is a 525-amino-acid chain: Glutamate--cysteine ligase (525 aa).

The protein belongs to the glutamate--cysteine ligase type 1 family. Type 1 subfamily.

It carries out the reaction L-cysteine + L-glutamate + ATP = gamma-L-glutamyl-L-cysteine + ADP + phosphate + H(+). Its pathway is sulfur metabolism; glutathione biosynthesis; glutathione from L-cysteine and L-glutamate: step 1/2. In Pseudoalteromonas translucida (strain TAC 125), this protein is Glutamate--cysteine ligase.